The following is a 340-amino-acid chain: Adenine deaminase (340 aa).

Residues H17, H19, and H197 each contribute to the Zn(2+) site. The active-site Proton donor is the E200. D278 provides a ligand contact to Zn(2+). D279 is a binding site for substrate.

Belongs to the metallo-dependent hydrolases superfamily. Adenosine and AMP deaminases family. Adenine deaminase type 2 subfamily. Requires Zn(2+) as cofactor.

It carries out the reaction adenine + H2O + H(+) = hypoxanthine + NH4(+). Its function is as follows. Catalyzes the hydrolytic deamination of adenine to hypoxanthine. Plays an important role in the purine salvage pathway and in nitrogen catabolism. The chain is Adenine deaminase from Streptomyces coelicolor (strain ATCC BAA-471 / A3(2) / M145).